We begin with the raw amino-acid sequence, 370 residues long: Sphingosine 1-phosphate receptor 2 (370 aa).

The Extracellular segment spans residues 1-57; that stretch reads MTTCRLFAGFCQAVTMSKYSQYFNKTLIQVHYLTAKEMTAEELRDRIESKQSLSSLN. N-linked (GlcNAc...) asparagine glycosylation occurs at N24. The chain crosses the membrane as a helical span at residues 58 to 78; it reads ILFVVICSIIILENLLVLIAV. Residues 79–87 are Cytoplasmic-facing; the sequence is FRNKKFHSA. Residues 88–108 traverse the membrane as a helical segment; the sequence is MFFFIGNLAFSDLLAGSAYIA. Topologically, residues 109-128 are extracellular; that stretch reads NIFLSGPRTFHLTPVQWFIR. A helical transmembrane segment spans residues 129–149; sequence EGTAFIALSASVFSLLAIAIE. At 150-167 the chain is on the cytoplasmic side; it reads RYIAITKVKVYGSNKTCR. The helical transmembrane segment at 168–193 threads the bilayer; it reads MFLLIGACWVMSILLGGLPIIGWNCI. The Extracellular segment spans residues 194-219; the sequence is NNLDDCSAVLPLNTRYYIRFVVTIFS. A helical transmembrane segment spans residues 220 to 230; the sequence is IILLSIVILYV. The Cytoplasmic portion of the chain corresponds to 231–254; sequence RIYLIVRTSHQEATNSPAYALLKT. Residues 255-275 form a helical membrane-spanning segment; the sequence is VTIVLGVFIICWLPAFTILLL. Over 276 to 289 the chain is Extracellular; the sequence is DTSCKMKQCPILNN. Residues 290–310 traverse the membrane as a helical segment; the sequence is AGIFFSFATLNSALNPLIYTL. At 311-370 the chain is on the cytoplasmic side; the sequence is RSKDMRKEFLRVLCCWGLLNCGRPPHRCMVPLKSSSSMEHCTNKHEHQSIPIMQDCTTCV. C325 carries S-palmitoyl cysteine lipidation.

Belongs to the G-protein coupled receptor 1 family.

The protein resides in the cell membrane. In terms of biological role, receptor for the lysosphingolipid sphingosine 1-phosphate (S1P). S1P receptor is critical for cell migration and epithelial integrity during vertebrate embryogenesis. Receptor for the chemokine-like protein FAM19A5. Mediates the inhibitory effect of FAM19A5 on vascular smooth muscle cell proliferation and migration. This Danio rerio (Zebrafish) protein is Sphingosine 1-phosphate receptor 2 (s1pr2).